The sequence spans 147 residues: Leech anti-platelet protein (147 aa).

Residues 1–21 form the signal peptide; the sequence is MNSFLFSLACSLLVAIPAISA. A disordered region spans residues 21–71; sequence AQDEDAGGAGDETSEGEDTTGSDETPSTGGGGDGGNEETITAGNEDCWSKR. Positions 22-41 are enriched in acidic residues; sequence QDEDAGGAGDETSEGEDTTG. Intrachain disulfides connect Cys67-Cys145, Cys92-Cys117, and Cys96-Cys105.

In terms of processing, the N-terminus is blocked. Expressed by salivary glands.

It localises to the secreted. Its function is as follows. Inhibits collagen-stimulated platelet aggregation (IC(50)=60 nM), dense granule release and serotonin release. Does not inhibit platelet aggregation induced by ADP, arachidonic acid, and thrombin. The protein is Leech anti-platelet protein of Haementeria officinalis (Mexican leech).